The chain runs to 945 residues: Poly [ADP-ribose] polymerase 1 (945 aa).

The PARP-type 1 zinc-finger motif lies at 10 to 96 (YAIEYAKSGR…KLRQEIQHFK (87 aa)). Zn(2+) contacts are provided by C22, C25, H54, and C57. Residues 117–183 (IKTEKSLSNR…DYEENFKIKA (67 aa)) form a PARP-type 2; degenerate zinc finger. The disordered stretch occupies residues 195-251 (RRSTEPATPASASPTPPEAETPVLSAEGSPESSNKRPASSEIIEIDGEGNPDENDFA). Residues 237–248 (IEIDGEGNPDEN) show a composition bias toward acidic residues. One can recognise a PADR1 zinc-binding domain in the interval 258-397 (KEARLMEVQK…NQMSERLYIG (140 aa)). The zinc ribbon stretch occupies residues 324–369 (GCPIICQTCSNGKIVYNSSCRTYVCTGYATEYSKCTYESKNPIRTP). Zn(2+)-binding residues include C329, C332, C348, and C358. The WGR domain occupies 464 to 563 (RCHVFKNEID…KHFRKMPGMF (100 aa)). Residues 586–704 (KTLLPKSVKE…DIKFAYDQIS (119 aa)) enclose the PARP alpha-helical domain. One can recognise a PARP catalytic domain in the interval 717-945 (DPVDINYQKL…RVKMHHARHL (229 aa)).

This sequence belongs to the ARTD/PARP family.

The protein localises to the nucleus. The enzyme catalyses NAD(+) + (ADP-D-ribosyl)n-acceptor = nicotinamide + (ADP-D-ribosyl)n+1-acceptor + H(+).. The catalysed reaction is L-aspartyl-[protein] + NAD(+) = 4-O-(ADP-D-ribosyl)-L-aspartyl-[protein] + nicotinamide. It catalyses the reaction L-glutamyl-[protein] + NAD(+) = 5-O-(ADP-D-ribosyl)-L-glutamyl-[protein] + nicotinamide. With respect to regulation, inhibited by N-(6-oxo-5,6-dihydrophenanthridin-2-yl)-N,N-dimethylacetamide HCl (PJ34), 1,5-dihydroxyisoquinoline (DHQ) and 3-aminobenzamide (3AB). Functionally, poly[ADP-ribose] polymerase modifies various nuclear proteins by poly(ADP-ribosyl)ation, a post-translational modification synthesized after DNA damage that appears as an obligatory step in a detection/signaling pathway leading to the reparation of DNA strand breaks and programmed cell death. Involved in protection of the genome against mutations. This is Poly [ADP-ribose] polymerase 1 from Caenorhabditis elegans.